A 631-amino-acid polypeptide reads, in one-letter code: Chaperone protein DnaK (631 aa).

Residue Thr-175 is modified to Phosphothreonine; by autocatalysis. The disordered stretch occupies residues 586–631 (GAEGAAAGAGAAGAAGAGASAGSASGSDDDTVEAEVVDDDDDKDNK). The segment covering 602 to 611 (AGASAGSASG) has biased composition (low complexity). Residues 612-631 (SDDDTVEAEVVDDDDDKDNK) show a composition bias toward acidic residues.

It belongs to the heat shock protein 70 family.

Acts as a chaperone. The polypeptide is Chaperone protein DnaK (Bifidobacterium longum subsp. infantis (strain ATCC 15697 / DSM 20088 / JCM 1222 / NCTC 11817 / S12)).